The primary structure comprises 115 residues: T cell receptor beta variable 11-3 (115 aa).

Residues 1-21 form the signal peptide; that stretch reads MGTRLLCWVAFCLLVEELIEA. Residues 22–115 form the Ig-like domain; the sequence is GVVQSPRYKI…SAVYLCASSL (94 aa). Cys42 and Cys111 are joined by a disulfide.

Alpha-beta TR is a heterodimer composed of an alpha and beta chain; disulfide-linked. The alpha-beta TR is associated with the transmembrane signaling CD3 coreceptor proteins to form the TR-CD3 (TcR or TCR). The assembly of alpha-beta TR heterodimers with CD3 occurs in the endoplasmic reticulum where a single alpha-beta TR heterodimer associates with one CD3D-CD3E heterodimer, one CD3G-CD3E heterodimer and one CD247 homodimer forming a stable octameric structure. CD3D-CD3E and CD3G-CD3E heterodimers preferentially associate with TR alpha and TR beta chains, respectively. The association of the CD247 homodimer is the last step of TcR assembly in the endoplasmic reticulum and is required for transport to the cell surface.

The protein localises to the cell membrane. V region of the variable domain of T cell receptor (TR) beta chain that participates in the antigen recognition. Alpha-beta T cell receptors are antigen specific receptors which are essential to the immune response and are present on the cell surface of T lymphocytes. Recognize peptide-major histocompatibility (MH) (pMH) complexes that are displayed by antigen presenting cells (APC), a prerequisite for efficient T cell adaptive immunity against pathogens. Binding of alpha-beta TR to pMH complex initiates TR-CD3 clustering on the cell surface and intracellular activation of LCK that phosphorylates the ITAM motifs of CD3G, CD3D, CD3E and CD247 enabling the recruitment of ZAP70. In turn ZAP70 phosphorylates LAT, which recruits numerous signaling molecules to form the LAT signalosome. The LAT signalosome propagates signal branching to three major signaling pathways, the calcium, the mitogen-activated protein kinase (MAPK) kinase and the nuclear factor NF-kappa-B (NF-kB) pathways, leading to the mobilization of transcription factors that are critical for gene expression and essential for T cell growth and differentiation. The T cell repertoire is generated in the thymus, by V-(D)-J rearrangement. This repertoire is then shaped by intrathymic selection events to generate a peripheral T cell pool of self-MH restricted, non-autoaggressive T cells. Post-thymic interaction of alpha-beta TR with the pMH complexes shapes TR structural and functional avidity. The polypeptide is T cell receptor beta variable 11-3 (Homo sapiens (Human)).